A 108-amino-acid chain; its full sequence is Large ribosomal subunit protein uL23 (108 aa).

This sequence belongs to the universal ribosomal protein uL23 family. In terms of assembly, part of the 50S ribosomal subunit. Contacts protein L29, and trigger factor when it is bound to the ribosome.

In terms of biological role, one of the early assembly proteins it binds 23S rRNA. One of the proteins that surrounds the polypeptide exit tunnel on the outside of the ribosome. Forms the main docking site for trigger factor binding to the ribosome. The chain is Large ribosomal subunit protein uL23 from Polaromonas naphthalenivorans (strain CJ2).